The chain runs to 382 residues: Lipid-A-disaccharide synthase (382 aa).

This sequence belongs to the LpxB family.

The enzyme catalyses 2-N,3-O-bis[(3R)-3-hydroxytetradecanoyl]-alpha-D-glucosaminyl 1-phosphate + UDP-2-N,3-O-bis[(3R)-3-hydroxytetradecanoyl]-alpha-D-glucosamine = lipid A disaccharide (E. coli) + UDP + H(+). It catalyses the reaction a lipid X + a UDP-2-N,3-O-bis[(3R)-3-hydroxyacyl]-alpha-D-glucosamine = a lipid A disaccharide + UDP + H(+). It participates in glycolipid biosynthesis; lipid IV(A) biosynthesis; lipid IV(A) from (3R)-3-hydroxytetradecanoyl-[acyl-carrier-protein] and UDP-N-acetyl-alpha-D-glucosamine: step 5/6. Functionally, condensation of UDP-2,3-diacylglucosamine and 2,3-diacylglucosamine-1-phosphate to form lipid A disaccharide, a precursor of lipid A, a phosphorylated glycolipid that anchors the lipopolysaccharide to the outer membrane of the cell. This is Lipid-A-disaccharide synthase from Escherichia coli O157:H7.